We begin with the raw amino-acid sequence, 309 residues long: MEMO1 family protein C4H3.04c (309 aa).

This sequence belongs to the MEMO1 family.

This Schizosaccharomyces pombe (strain 972 / ATCC 24843) (Fission yeast) protein is MEMO1 family protein C4H3.04c.